The following is a 310-amino-acid chain: Haloalkane dehalogenase (310 aa).

The AB hydrolase-1 domain occupies 49–295; sequence VFLCLHGEPT…DAGHFVQEFG (247 aa). The Nucleophile role is filled by Asp-124. Residues Trp-125 and Trp-175 each contribute to the chloride site. Residue Asp-260 is the Proton donor of the active site. The active-site Proton acceptor is His-289.

It belongs to the haloalkane dehalogenase family. Type 1 subfamily. Monomer.

It catalyses the reaction 1-haloalkane + H2O = a halide anion + a primary alcohol + H(+). The enzyme catalyses 1,2-dichloroethane + H2O = 2-chloroethanol + chloride + H(+). It functions in the pathway xenobiotic degradation; 1,2-dichloroethane degradation; glycolate from 1,2-dichloroethane: step 1/4. Inhibited by thiol reagents such as p-chloromercuribenzoate and iodoacetamide. Catalyzes hydrolytic cleavage of carbon-halogen bonds in halogenated aliphatic compounds, leading to the formation of the corresponding primary alcohols, halide ions and protons. Has a broad substrate specificity, which includes terminally mono- and di- chlorinated and brominated alkanes (up to C4 only). The highest activity was found with 1,2-dichloroethane, 1,3-dichloropropane, and 1,2-dibromoethane. This Xanthobacter autotrophicus protein is Haloalkane dehalogenase (dhlA).